We begin with the raw amino-acid sequence, 379 residues long: Queuine tRNA-ribosyltransferase (379 aa).

Asp94 (proton acceptor) is an active-site residue. Substrate contacts are provided by residues Asp94–Phe98, Asp148, Gln191, and Gly218. The interval Gly249–Ser255 is RNA binding. Asp268 functions as the Nucleophile in the catalytic mechanism. Residues Thr273–Arg277 are RNA binding; important for wobble base 34 recognition. Residues Cys306, Cys308, Cys311, and His337 each coordinate Zn(2+).

Belongs to the queuine tRNA-ribosyltransferase family. Homodimer. Within each dimer, one monomer is responsible for RNA recognition and catalysis, while the other monomer binds to the replacement base PreQ1. Zn(2+) serves as cofactor.

The enzyme catalyses 7-aminomethyl-7-carbaguanine + guanosine(34) in tRNA = 7-aminomethyl-7-carbaguanosine(34) in tRNA + guanine. It functions in the pathway tRNA modification; tRNA-queuosine biosynthesis. Catalyzes the base-exchange of a guanine (G) residue with the queuine precursor 7-aminomethyl-7-deazaguanine (PreQ1) at position 34 (anticodon wobble position) in tRNAs with GU(N) anticodons (tRNA-Asp, -Asn, -His and -Tyr). Catalysis occurs through a double-displacement mechanism. The nucleophile active site attacks the C1' of nucleotide 34 to detach the guanine base from the RNA, forming a covalent enzyme-RNA intermediate. The proton acceptor active site deprotonates the incoming PreQ1, allowing a nucleophilic attack on the C1' of the ribose to form the product. After dissociation, two additional enzymatic reactions on the tRNA convert PreQ1 to queuine (Q), resulting in the hypermodified nucleoside queuosine (7-(((4,5-cis-dihydroxy-2-cyclopenten-1-yl)amino)methyl)-7-deazaguanosine). The sequence is that of Queuine tRNA-ribosyltransferase from Anoxybacillus flavithermus (strain DSM 21510 / WK1).